We begin with the raw amino-acid sequence, 701 residues long: DC-STAMP domain-containing protein 2 (701 aa).

Helical transmembrane passes span 15 to 35, 40 to 60, 82 to 102, and 215 to 235; these read TCGFTVGLSLATAFGLLELLG, PFGCLVTTVTLAAFLSLGMGF, LLLLVASFGLVLQGPCANTLQ, and FPHLCYALLPYKLLVCGLASL. N-linked (GlcNAc...) asparagine glycans are attached at residues asparagine 272 and asparagine 284. 2 helical membrane-spanning segments follow: residues 310–330 and 404–424; these read ALSLMGYTMPLLIGFLYIQAL and LLIMLLLVFLDYGVFWLLDLA. N-linked (GlcNAc...) asparagine glycosylation occurs at asparagine 468. Residues 488-508 form a helical membrane-spanning segment; the sequence is YIVIGTMYGLCFFVTLFGSYV. The interval 673-701 is disordered; the sequence is LQEALGTNLSDKSTSKPERAGNRNQDRKQ. Residues 685-701 are compositionally biased toward basic and acidic residues; that stretch reads STSKPERAGNRNQDRKQ.

Interacts with DCST1. In terms of tissue distribution, expressed in testis.

The protein localises to the cytoplasmic vesicle. The protein resides in the secretory vesicle. Its subcellular location is the acrosome membrane. Its function is as follows. Essential sperm cell-surface protein required for sperm-egg fusion and fertilization. This chain is DC-STAMP domain-containing protein 2, found in Mus musculus (Mouse).